We begin with the raw amino-acid sequence, 249 residues long: Small ribosomal subunit protein uS2 (249 aa).

Belongs to the universal ribosomal protein uS2 family.

In Bordetella avium (strain 197N), this protein is Small ribosomal subunit protein uS2.